Consider the following 1009-residue polypeptide: Ulvan lyase, long isoform (1009 aa).

Residues 1–32 (MTAQKSKYFNRIMTMNTLLFSLLTVGFSQAYA) form the signal peptide. 137–138 (SH) serves as a coordination point for substrate. H138 serves as the catalytic Proton donor/acceptor. Residues D200, D210, and K212 each coordinate Ca(2+). Y291 and R308 together coordinate substrate. Residues D311, D314, and Y316 each contribute to the Ca(2+) site. Y372 lines the substrate pocket.

It belongs to the polysaccharide lyase 24 family.

Functionally, ulvan lyase involved in ulvan degradation. Ulvan is the main polysaccharide component of the Ulvales (green seaweed) cell wall. It is composed of disaccharide building blocks comprising 3-sulfated rhamnose (Rha3S) linked to D-glucuronic acid (GlcA), L-iduronic acid (IduA), or D-xylose (Xyl). Ulvan lyase catalyzes preferentially the endolytic cleavage of the glycosidic bond between Rha3S and the uronic acid GlcA, but not IduA, producing oligosaccharides that have unsaturated 4-deoxy-L-threo-hex-4-enopyranosiduronic acid (deltaUA) at the non-reducing end. The most abundant end products in the degradation of the ulvan polysaccharide were deltaUA-Rha3S disaccharides and deltaUA-Rha3S-IduA-Rha3S and deltaUA-Rha3S-Xyl-Rha3S tetrasaccharides. In Glaciecola sp. (strain KUL10), this protein is Ulvan lyase, long isoform (ullA).